Here is a 354-residue protein sequence, read N- to C-terminus: Isopentenyl-diphosphate delta-isomerase (354 aa).

11–12 (KK) is a substrate binding site. Residues Ser-67, 68 to 70 (SMT), Ser-98, and Asn-126 each bind FMN. 98 to 100 (SFK) serves as a coordination point for substrate. A substrate-binding site is contributed by Gln-160. Residue Glu-161 participates in Mg(2+) binding. FMN contacts are provided by residues Lys-192, Thr-222, and 289 to 290 (AA).

It belongs to the IPP isomerase type 2 family. Homooctamer. Dimer of tetramers. The cofactor is FMN. NADPH is required as a cofactor. Requires Mg(2+) as cofactor.

Its subcellular location is the cytoplasm. It carries out the reaction isopentenyl diphosphate = dimethylallyl diphosphate. Its function is as follows. Involved in the biosynthesis of isoprenoids. Catalyzes the 1,3-allylic rearrangement of the homoallylic substrate isopentenyl (IPP) to its allylic isomer, dimethylallyl diphosphate (DMAPP). This chain is Isopentenyl-diphosphate delta-isomerase, found in Borrelia garinii subsp. bavariensis (strain ATCC BAA-2496 / DSM 23469 / PBi) (Borreliella bavariensis).